Consider the following 545-residue polypeptide: Chaperonin GroEL (545 aa).

Residues 30-33, Lys51, 87-91, Gly415, 479-481, and Asp495 each bind ATP; these read TLGP, DGTTT, and NAA.

The protein belongs to the chaperonin (HSP60) family. Forms a cylinder of 14 subunits composed of two heptameric rings stacked back-to-back. Interacts with the co-chaperonin GroES.

The protein localises to the cytoplasm. The catalysed reaction is ATP + H2O + a folded polypeptide = ADP + phosphate + an unfolded polypeptide.. Together with its co-chaperonin GroES, plays an essential role in assisting protein folding. The GroEL-GroES system forms a nano-cage that allows encapsulation of the non-native substrate proteins and provides a physical environment optimized to promote and accelerate protein folding. The sequence is that of Chaperonin GroEL from Cellvibrio japonicus (strain Ueda107) (Pseudomonas fluorescens subsp. cellulosa).